Here is an 895-residue protein sequence, read N- to C-terminus: Catenin alpha-3 (895 aa).

A coiled-coil region spans residues 74–107 (EMIAKEATVLKEELAAALQEVRKESKALKVSAER). Residue Ser160 is modified to Phosphoserine. A coiled-coil region spans residues 325 to 379 (RERIIAECNAIRQALQDLLTEYMSNTGKTERSNTLNTAIVNMSKKTRDLRRQLRK). Thr361 is modified (phosphothreonine). The disordered stretch occupies residues 635 to 660 (DVSDLEDDHEVRSHTSIQTEGKTDRA). Residues Ser637 and Ser647 each carry the phosphoserine modification. Residue Thr649 is modified to Phosphothreonine.

It belongs to the vinculin/alpha-catenin family. As to quaternary structure, interacts with CTNNB1. Interacts with PKP2. In terms of tissue distribution, expressed in heart (at protein level).

It localises to the cytoplasm. The protein localises to the cytoskeleton. The protein resides in the cell junction. Its subcellular location is the desmosome. May be involved in formation of stretch-resistant cell-cell adhesion complexes. The chain is Catenin alpha-3 from Mus musculus (Mouse).